Here is a 531-residue protein sequence, read N- to C-terminus: Polygalacturonase (531 aa).

A signal peptide spans 1–23 (MILSHRYTLIALAAAILSSGAHA). Asp-307 (proton donor) is an active-site residue. His-333 is an active-site residue. The tract at residues 518–531 (AFVPLKSVAPTSPI) is required for PGA export across the outer membrane and catalytic activity.

This sequence belongs to the glycosyl hydrolase 28 family. In terms of assembly, monomer.

It localises to the secreted. It catalyses the reaction (1,4-alpha-D-galacturonosyl)n+m + H2O = (1,4-alpha-D-galacturonosyl)n + (1,4-alpha-D-galacturonosyl)m.. Its function is as follows. Contributes to the wilt disease production on tomato. The protein is Polygalacturonase (pglA) of Ralstonia nicotianae (strain ATCC BAA-1114 / GMI1000) (Ralstonia solanacearum).